The sequence spans 476 residues: Rab-3A-interacting protein (476 aa).

S163 and S165 each carry phosphoserine; by PKB/AKT1. A coiled-coil region spans residues 165–260 (SVLEVREKGY…EVAALKTLVL (96 aa)). Positions 262-297 (SSPTSPTQEPLPGGKTPFKKGHTRNKSTSSAMSGSH) are disordered. Residues S263, S266, S288, and S296 each carry the phosphoserine modification. The segment covering 287 to 297 (KSTSSAMSGSH) has biased composition (polar residues). An important for RAB11A binding region spans residues 435–444 (TYIRYIQQGL).

It belongs to the SEC2 family. As to quaternary structure, homodimer. Interacts with the N-terminal region of SSX2. Interacts with the GDP-bound forms of RAB8A and RAB8B. The interaction with RAB8A is prevented by phosphorylation of RAB8A at 'Thr-72'. Interacts with the GDP-bound forms of RAB3A and RAB3D. Interacts with DCDC1. Interacts (via the N-terminal region) with TRAPPC14; this interaction mediates RAB3IP association with the TRAPP II complex. Forms a heterotetramer with RAB11A where RAB3IP homodimer binds two RAB11A subunits. Forms a complex with RAB11A and RAB11FIP3, probably a heterohexamer with two of each protein subunit, where Rabin8/RAB3IP and RAB11FIP3 simultaneously bind to RAB11A; the complex promotes preciliary trafficking. Forms a complex containing RAB11A, ASAP1, RAB3IP, RAP11FIP3 and ARF4; the complex promotes preciliary trafficking; the complex binds to RHO in photoreceptor cells and promotes RHO ciliary transport. Post-translationally, phosphorylated by AKT1; the phosphorylation alters its GEF activity. As to expression, expressed in brain, kidney, heart, pancreas and placenta. Not detected in skeletal muscle or liver.

It localises to the cytoplasm. The protein resides in the nucleus. It is found in the cytoskeleton. Its subcellular location is the cell projection. The protein localises to the lamellipodium. It localises to the vesicle. The protein resides in the microtubule organizing center. It is found in the centrosome. With respect to regulation, phosphorylation by ATK1 alters its GEF activity. Complex formation with RAB11A and RAB11FIP3 and ciliogenesis function are competitively inhibited by RAB11A-WDR44 interaction. Its function is as follows. Guanine nucleotide exchange factor (GEF) which may activate RAB8A and RAB8B. Promotes the exchange of GDP to GTP, converting inactive GDP-bound Rab proteins into their active GTP-bound form. Mediates the release of GDP from RAB8A and RAB8B but not from RAB3A or RAB5. Modulates actin organization and promotes polarized transport of RAB8A-specific vesicles to the cell surface. Together with RAB11A, RAB8A, the exocyst complex, PARD3, PRKCI, ANXA2, CDC42 and DNMBP promotes transcytosis of PODXL to the apical membrane initiation sites (AMIS), apical surface formation and lumenogenesis. Part of the ciliary targeting complex containing Rab11, ASAP1, RAB3IP and RAB11FIP3 and ARF4 that promotes RAB3IP preciliary vesicle trafficking to mother centriole and ciliogenesis initiation. The protein is Rab-3A-interacting protein of Homo sapiens (Human).